A 474-amino-acid polypeptide reads, in one-letter code: Glutamate--tRNA ligase 1 (474 aa).

Residues 11–21 carry the 'HIGH' region motif; it reads PSPTGYLHIGG. Positions 240-244 match the 'KMSKS' region motif; it reads KLSKR. K243 serves as a coordination point for ATP.

The protein belongs to the class-I aminoacyl-tRNA synthetase family. Glutamate--tRNA ligase type 1 subfamily. In terms of assembly, monomer.

The protein resides in the cytoplasm. The catalysed reaction is tRNA(Glu) + L-glutamate + ATP = L-glutamyl-tRNA(Glu) + AMP + diphosphate. Functionally, catalyzes the attachment of glutamate to tRNA(Glu) in a two-step reaction: glutamate is first activated by ATP to form Glu-AMP and then transferred to the acceptor end of tRNA(Glu). The protein is Glutamate--tRNA ligase 1 of Mesorhizobium japonicum (strain LMG 29417 / CECT 9101 / MAFF 303099) (Mesorhizobium loti (strain MAFF 303099)).